Reading from the N-terminus, the 289-residue chain is Serine/threonine-protein phosphatase Pgam5, mitochondrial (289 aa).

The helical transmembrane segment at F7–L23 threads the bilayer.

This sequence belongs to the phosphoglycerate mutase family. BPG-dependent PGAM subfamily. In terms of assembly, interacts with Pk92B/ASK1.

The protein localises to the mitochondrion outer membrane. It carries out the reaction O-phospho-L-seryl-[protein] + H2O = L-seryl-[protein] + phosphate. It catalyses the reaction O-phospho-L-threonyl-[protein] + H2O = L-threonyl-[protein] + phosphate. Its function is as follows. Displays phosphatase activity for serine/threonine residues, and dephosphorylates and activates Pk92B kinase. Has apparently no phosphoglycerate mutase activity. This chain is Serine/threonine-protein phosphatase Pgam5, mitochondrial, found in Drosophila virilis (Fruit fly).